Consider the following 416-residue polypeptide: Serine--tRNA ligase (416 aa).

Residue 232–234 (TAE) participates in L-serine binding. 263 to 265 (RKE) serves as a coordination point for ATP. Glu286 contributes to the L-serine binding site. 350 to 353 (EISS) is a binding site for ATP. L-serine is bound at residue Ser384.

This sequence belongs to the class-II aminoacyl-tRNA synthetase family. Type-1 seryl-tRNA synthetase subfamily. As to quaternary structure, homodimer. The tRNA molecule binds across the dimer.

It is found in the cytoplasm. The catalysed reaction is tRNA(Ser) + L-serine + ATP = L-seryl-tRNA(Ser) + AMP + diphosphate + H(+). It catalyses the reaction tRNA(Sec) + L-serine + ATP = L-seryl-tRNA(Sec) + AMP + diphosphate + H(+). Its pathway is aminoacyl-tRNA biosynthesis; selenocysteinyl-tRNA(Sec) biosynthesis; L-seryl-tRNA(Sec) from L-serine and tRNA(Sec): step 1/1. Its function is as follows. Catalyzes the attachment of serine to tRNA(Ser). Is also able to aminoacylate tRNA(Sec) with serine, to form the misacylated tRNA L-seryl-tRNA(Sec), which will be further converted into selenocysteinyl-tRNA(Sec). The sequence is that of Serine--tRNA ligase from Nautilia profundicola (strain ATCC BAA-1463 / DSM 18972 / AmH).